An 85-amino-acid chain; its full sequence is U5-theraphotoxin-Hhn1a (85 aa).

An N-terminal signal peptide occupies residues 1-21 (MKSQIFFAVAALFLLTVRTYA). The propeptide occupies 22–49 (SKSKEQDLRDALFSAMFSADNQLNPQER). Disulfide bonds link cysteine 51/cysteine 65, cysteine 58/cysteine 70, and cysteine 64/cysteine 77.

This sequence belongs to the neurotoxin 10 (Hwtx-1) family. 18 (Hntx-VII) subfamily. In terms of tissue distribution, expressed by the venom gland.

The protein localises to the secreted. Functionally, ion channel impairing toxin that inhibits voltage-gated sodium channels. The recombinantly expressed toxin shows a weak activity against Nav1.7/SCN9A, and shifts the voltage dependence of channel activation to more depolarized potentials. The polypeptide is U5-theraphotoxin-Hhn1a (Cyriopagopus hainanus (Chinese bird spider)).